A 196-amino-acid chain; its full sequence is Baseplate wedge protein gp53 (196 aa).

In terms of assembly, part of the baseplate macromolecular complex which consists of gp5, gp5.4, gp27 (central spike complex); gp6, gp25, gp53 (inner baseplate); gp7, gp8 (intermediate baseplate); gp9, gp10, gp11, gp12 (peripheral); gp48 and gp54 (proximal region of the tail tube). Interacts with gp25 and with the (gp6)2-gp7 heterotrimeric molecule.

The protein resides in the virion. Baseplate protein that is located next to the tail tube (inner baseplate). Involved in the tail assembly. Involved in the tail assembly. This chain is Baseplate wedge protein gp53 (53), found in Enterobacteria phage T4 (Bacteriophage T4).